The primary structure comprises 81 residues: A-kinase anchor protein 7 isoform alpha (81 aa).

Residue Gly-2 is the site of N-myristoyl glycine attachment. The interval 2 to 11 (GQLCCFPFAR) is required for membrane localization. S-palmitoyl cysteine attachment occurs at residues Cys-5 and Cys-6. The tract at residues 29 to 42 (LVRLSKRLVENAVL) is RII-binding. Residues 49–81 (LEETQNKKQPGEGNSTKAEEGDRNGDGSDNNRK) form a disordered region. Residues 65 to 81 (KAEEGDRNGDGSDNNRK) are compositionally biased toward basic and acidic residues.

As to quaternary structure, binds cAMP-dependent protein kinase (PKA). Interacts with PRKCA; only the cytoplasmic form is capable of interacting with PRKCA.

Its subcellular location is the lateral cell membrane. Functionally, targets the cAMP-dependent protein kinase (PKA) to the plasma membrane, and permits functional coupling to the L-type calcium channel. The membrane-associated form reduces epithelial sodium channel (ENaC) activity, whereas the free cytoplasmic form may negatively regulate ENaC channel feedback inhibition by intracellular sodium. The chain is A-kinase anchor protein 7 isoform alpha (Akap7) from Mus musculus (Mouse).